Here is a 144-residue protein sequence, read N- to C-terminus: Small ribosomal subunit protein uS19 (144 aa).

This sequence belongs to the universal ribosomal protein uS19 family.

In Dictyostelium discoideum (Social amoeba), this protein is Small ribosomal subunit protein uS19 (rps15).